The chain runs to 1458 residues: ABC multidrug transporter B (1458 aa).

5 helical membrane passes run 30-50, 70-90, 102-122, 128-148, and 165-185; these read FSLL…VLII, LLWA…VLAV, ASIA…LLSC, STTP…FDIA, and IAIL…LEAV. A glycan (N-linked (GlcNAc...) asparagine) is linked at Asn-208. A helical transmembrane segment spans residues 273–295; that stretch reads WPLLSAVPPRACLAALNFCQPLL. Residues 283 to 561 enclose the ABC transmembrane type-1 1 domain; sequence ACLAALNFCQ…LVMALMTFVG (279 aa). An N-linked (GlcNAc...) asparagine glycan is attached at Asn-309. A run of 5 helical transmembrane segments spans residues 314–334, 387–407, 411–431, 501–521, and 541–561; these read IGYG…VTMG, WQTI…IYLL, LGVA…GCLI, LGWT…YGIM, and LFAL…TFVG. The region spanning 626 to 853 is the ABC transporter 1 domain; it reads LTVKNATFAW…AGGYVSSFGL (228 aa). N-linked (GlcNAc...) asparagine glycosylation is present at Asn-630. 660 to 667 is a binding site for ATP; sequence GPSGCGKS. N-linked (GlcNAc...) asparagine glycans are attached at residues Asn-702, Asn-804, and Asn-879. Positions 933–1182 constitute an ABC transmembrane type-1 2 domain; the sequence is PNGRTGYYLG…LVTFWTNLET (250 aa). 6 helical membrane passes run 940–960, 978–998, 1016–1036, 1040–1060, 1125–1145, and 1156–1176; these read YLGI…IGCW, LLAT…SGSI, AAIN…LMGI, YAAI…KVYL, LTLT…VLVV, and VGVA…LVTF. Positions 1219–1449 constitute an ABC transporter 2 domain; sequence IEFKSVSAEY…EGSYFSRLYA (231 aa). 1252-1259 is a binding site for ATP; that stretch reads GRTGSGKT. N-linked (GlcNAc...) asparagine glycosylation occurs at Asn-1316.

Belongs to the ABC transporter superfamily. ABCC family. Conjugate transporter (TC 3.A.1.208) subfamily.

Its subcellular location is the cell membrane. In terms of biological role, pleiotropic ABC efflux transporter that may be involved in A.fumigatus adaptation to azoles such as vorizonazole. The protein is ABC multidrug transporter B of Aspergillus fumigatus (strain ATCC MYA-4609 / CBS 101355 / FGSC A1100 / Af293) (Neosartorya fumigata).